The primary structure comprises 150 residues: UPF0336 protein SCO4636 (150 aa).

The MaoC-like domain occupies 8 to 116; sequence VGRSYPPTAP…STIEAIKSMA (109 aa).

Belongs to the UPF0336 family.

The sequence is that of UPF0336 protein SCO4636 from Streptomyces coelicolor (strain ATCC BAA-471 / A3(2) / M145).